The primary structure comprises 671 residues: UvrABC system protein B (671 aa).

The region spanning 26–414 (EGLENGLAHQ…GGDIIEQVVR (389 aa)) is the Helicase ATP-binding domain. 39–46 (GVTGSGKT) serves as a coordination point for ATP. The Beta-hairpin motif lies at 92-115 (YYDYYQPEAYVPSSDTFIEKDASV). A Helicase C-terminal domain is found at 431-593 (QVDDLLSEIR…IIPQGLNKKI (163 aa)). The region spanning 631–666 (DQKIRELEAKMYTYAQNLEFEQAAELRDQVHQLRQQ) is the UVR domain.

The protein belongs to the UvrB family. In terms of assembly, forms a heterotetramer with UvrA during the search for lesions. Interacts with UvrC in an incision complex.

Its subcellular location is the cytoplasm. Functionally, the UvrABC repair system catalyzes the recognition and processing of DNA lesions. A damage recognition complex composed of 2 UvrA and 2 UvrB subunits scans DNA for abnormalities. Upon binding of the UvrA(2)B(2) complex to a putative damaged site, the DNA wraps around one UvrB monomer. DNA wrap is dependent on ATP binding by UvrB and probably causes local melting of the DNA helix, facilitating insertion of UvrB beta-hairpin between the DNA strands. Then UvrB probes one DNA strand for the presence of a lesion. If a lesion is found the UvrA subunits dissociate and the UvrB-DNA preincision complex is formed. This complex is subsequently bound by UvrC and the second UvrB is released. If no lesion is found, the DNA wraps around the other UvrB subunit that will check the other stand for damage. The protein is UvrABC system protein B of Yersinia pestis.